The chain runs to 286 residues: Eukaryotic translation initiation factor 3 subunit F-2 (286 aa).

Residues 11 to 147 enclose the MPN domain; sequence ILLQPLVLLH…MRLYTAVVMG (137 aa).

This sequence belongs to the eIF-3 subunit F family. In terms of assembly, component of the eukaryotic translation initiation factor 3 (eIF-3) complex. The eIF-3 complex interacts with pix.

Its subcellular location is the cytoplasm. Functionally, component of the eukaryotic translation initiation factor 3 (eIF-3) complex, which is involved in protein synthesis of a specialized repertoire of mRNAs and, together with other initiation factors, stimulates binding of mRNA and methionyl-tRNAi to the 40S ribosome. The eIF-3 complex specifically targets and initiates translation of a subset of mRNAs involved in cell proliferation. In Drosophila willistoni (Fruit fly), this protein is Eukaryotic translation initiation factor 3 subunit F-2.